Reading from the N-terminus, the 63-residue chain is MKAKELREKSVEELNTELLNLLREQFNLRMQVASGQLQQSHLLKQVRRDVARVKTLLNEKAGA.

The protein belongs to the universal ribosomal protein uL29 family.

This chain is Large ribosomal subunit protein uL29, found in Shigella dysenteriae serotype 1 (strain Sd197).